A 337-amino-acid chain; its full sequence is UPF0252 protein PH1321 (337 aa).

The helical transmembrane segment at 100 to 120 threads the bilayer; that stretch reads IIGMLFLVFIILPAITSNLWS.

Belongs to the UPF0252 family.

It localises to the membrane. In Pyrococcus horikoshii (strain ATCC 700860 / DSM 12428 / JCM 9974 / NBRC 100139 / OT-3), this protein is UPF0252 protein PH1321.